We begin with the raw amino-acid sequence, 355 residues long: uncharacterized protein (355 aa).

It belongs to the ycf89 family.

It is found in the plastid. Its subcellular location is the chloroplast. This is an uncharacterized protein from Trieres chinensis (Marine centric diatom).